Consider the following 98-residue polypeptide: Large ribosomal subunit protein bL25 (98 aa).

Positions 1-22 (MANFVLNATARNEDKQGKGASR) are disordered.

The protein belongs to the bacterial ribosomal protein bL25 family. In terms of assembly, part of the 50S ribosomal subunit; part of the 5S rRNA/L5/L18/L25 subcomplex. Contacts the 5S rRNA. Binds to the 5S rRNA independently of L5 and L18.

This is one of the proteins that binds to the 5S RNA in the ribosome where it forms part of the central protuberance. The chain is Large ribosomal subunit protein bL25 from Acinetobacter baylyi (strain ATCC 33305 / BD413 / ADP1).